The primary structure comprises 457 residues: C4-dicarboxylate transport protein (457 aa).

The next 7 helical transmembrane spans lie at 20–42, 51–73, 88–110, 138–158, 166–188, 212–234, and 241–263; these read LYFQVVVAIVLGALLGHFEPAFA, AFIKLVKMIIAPVIFLTIVTGIA, AMAYFLFFSTLALVVGLVVAHVV, LTLVGFLMDIIPNSLIGAFTG, LTGPNILQVLFVAVLFGVSLALV, ILMRAAPIGAFGAIAFTIGKYGV, and AWLVGSFYLTSLLFVLVILGLVS.

This sequence belongs to the dicarboxylate/amino acid:cation symporter (DAACS) (TC 2.A.23) family.

It localises to the cell inner membrane. In terms of biological role, responsible for the transport of dicarboxylates such as succinate, fumarate, and malate from the periplasm across the membrane. In Xanthomonas axonopodis pv. citri (strain 306), this protein is C4-dicarboxylate transport protein.